The following is a 218-amino-acid chain: Small ribosomal subunit protein uS3 (218 aa).

The KH type-2 domain maps to 38 to 106 (VREYINKRLQ…RVHINIVEIK (69 aa)).

It belongs to the universal ribosomal protein uS3 family. In terms of assembly, part of the 30S ribosomal subunit. Forms a tight complex with proteins S10 and S14.

In terms of biological role, binds the lower part of the 30S subunit head. Binds mRNA in the 70S ribosome, positioning it for translation. The chain is Small ribosomal subunit protein uS3 from Geobacillus thermodenitrificans (strain NG80-2).